The sequence spans 436 residues: Alpha-galactosidase mel1 (436 aa).

A signal peptide spans 1 to 24 (MISISFLNCFFLVFLFLFFSDVHG). C45 and C77 are disulfide-bonded. N84 carries an N-linked (GlcNAc...) asparagine glycan. A disulfide bridge links C126 with C156. D154 serves as the catalytic Nucleophile. Residue N180 is glycosylated (N-linked (GlcNAc...) asparagine). The active-site Proton donor is the D214.

Belongs to the glycosyl hydrolase 27 family.

The protein resides in the endoplasmic reticulum lumen. The protein localises to the secreted. It catalyses the reaction Hydrolysis of terminal, non-reducing alpha-D-galactose residues in alpha-D-galactosides, including galactose oligosaccharides, galactomannans and galactolipids.. Secreted alpha-galactosidase required for catabolic conversion of melibiose to glucose and galactose. The sequence is that of Alpha-galactosidase mel1 (mel1) from Schizosaccharomyces pombe (strain 972 / ATCC 24843) (Fission yeast).